Here is a 250-residue protein sequence, read N- to C-terminus: L-ascorbate peroxidase 1, cytosolic (250 aa).

The active-site Proton acceptor is His-42. The interval 113-137 (VPFHPGREDKPAPPPEGRLPDATKG) is disordered. His-163 is a binding site for heme b. Thr-164, Thr-180, Asn-182, and Asp-187 together coordinate K(+).

The protein belongs to the peroxidase family. Ascorbate peroxidase subfamily. Heme b is required as a cofactor.

The protein localises to the cytoplasm. It carries out the reaction L-ascorbate + H2O2 = L-dehydroascorbate + 2 H2O. Functionally, plays a key role in hydrogen peroxide removal. This Oryza sativa subsp. indica (Rice) protein is L-ascorbate peroxidase 1, cytosolic (APX1).